Consider the following 64-residue polypeptide: Large ribosomal subunit protein bL32 (64 aa).

The protein belongs to the bacterial ribosomal protein bL32 family.

The polypeptide is Large ribosomal subunit protein bL32 (Flavobacterium psychrophilum (strain ATCC 49511 / DSM 21280 / CIP 103535 / JIP02/86)).